We begin with the raw amino-acid sequence, 90 residues long: Co-chaperonin GroES (90 aa).

It belongs to the GroES chaperonin family. In terms of assembly, heptamer of 7 subunits arranged in a ring. Interacts with the chaperonin GroEL.

The protein localises to the cytoplasm. Functionally, together with the chaperonin GroEL, plays an essential role in assisting protein folding. The GroEL-GroES system forms a nano-cage that allows encapsulation of the non-native substrate proteins and provides a physical environment optimized to promote and accelerate protein folding. GroES binds to the apical surface of the GroEL ring, thereby capping the opening of the GroEL channel. The protein is Co-chaperonin GroES of Bacteroides thetaiotaomicron (strain ATCC 29148 / DSM 2079 / JCM 5827 / CCUG 10774 / NCTC 10582 / VPI-5482 / E50).